A 185-amino-acid polypeptide reads, in one-letter code: MEIEKNKEKIKLQFDIIKRTDGYISTTNNKAALLLAVNGATATILSNKVGYFAGLFHENCLYMVIFFLLLFMISIFIFMSVLLSLKSIIPNMRGVKEKWDSTDSNVSFVYISSNNDGKNYYKKYLMESEDGLLLDMCEQSFILSCIAKQKFLFFSSAVSWIKRAYACIIVLVIFKFVDYVNGALL.

3 consecutive transmembrane segments (helical) span residues 32-52 (ALLL…VGYF), 63-83 (MVIF…SVLL), and 141-161 (FILS…VSWI).

The protein localises to the cell inner membrane. Its function is as follows. Pycsar (pyrimidine cyclase system for antiphage resistance) provides immunity against bacteriophage. The pyrimidine cyclase (PycC) synthesizes cyclic nucleotides in response to infection; these serve as specific second messenger signals. The signals activate the adjacent effector, leading to bacterial cell death and abortive phage infection. A clade E Pycsar system. Functionally, the effector component of a two-gene Pycsar system. Expression of this and adjacent cytidylate cyclase EcPycC (AC P0DV24) confers resistance to bacteriophage P1 and T5; this protein is required for resistance. When cells expressing the Pycsar system are infected by phage T5 at low multiplicity of infection (0.2 MOI) the culture survives, at 2.0 MOI bacteria enter growth arrest. The same cells enter growth arrest after exposure to 250 uM cCMP but not cUMP; this effector protein responds only to cCMP, usually produced by its cognate NTP cyclase. Some of the cells treated with cCMP have abnormal membrane protrusions, probably due to effects on membrane integrity. The chain is Pycsar effector protein EcPycTM from Escherichia coli.